A 345-amino-acid polypeptide reads, in one-letter code: D-alanine--D-alanine ligase (345 aa).

The region spanning 133–332 (KWLCHARGVK…LPHTKRAKVT (200 aa)) is the ATP-grasp domain. 160–211 (AYPIIVKPSRLGSSIGVSIVKDESKLDYALDSAFEFDNTVIVEPFLEGVKEY) lines the ATP pocket. Residues Asp284, Glu296, and Asn298 each contribute to the Mg(2+) site.

This sequence belongs to the D-alanine--D-alanine ligase family. Mg(2+) serves as cofactor. It depends on Mn(2+) as a cofactor.

The protein localises to the cytoplasm. The catalysed reaction is 2 D-alanine + ATP = D-alanyl-D-alanine + ADP + phosphate + H(+). It functions in the pathway cell wall biogenesis; peptidoglycan biosynthesis. In terms of biological role, cell wall formation. The sequence is that of D-alanine--D-alanine ligase from Sulfurimonas denitrificans (strain ATCC 33889 / DSM 1251) (Thiomicrospira denitrificans (strain ATCC 33889 / DSM 1251)).